Consider the following 629-residue polypeptide: tRNA uridine 5-carboxymethylaminomethyl modification enzyme MnmG (629 aa).

13–18 (GGGHAG) contributes to the FAD binding site. 273-287 (GPRYCPSIEDKITRF) provides a ligand contact to NAD(+).

This sequence belongs to the MnmG family. In terms of assembly, homodimer. Heterotetramer of two MnmE and two MnmG subunits. FAD is required as a cofactor.

The protein localises to the cytoplasm. NAD-binding protein involved in the addition of a carboxymethylaminomethyl (cmnm) group at the wobble position (U34) of certain tRNAs, forming tRNA-cmnm(5)s(2)U34. The protein is tRNA uridine 5-carboxymethylaminomethyl modification enzyme MnmG of Aeromonas hydrophila subsp. hydrophila (strain ATCC 7966 / DSM 30187 / BCRC 13018 / CCUG 14551 / JCM 1027 / KCTC 2358 / NCIMB 9240 / NCTC 8049).